Reading from the N-terminus, the 27-residue chain is C-reactive protein P1 (27 aa).

The interval 1-27 (IPQDLSGKMLTFPKEEDDDDVKLMTPK) is disordered. The Pentraxin (PTX) domain maps to 6–27 (SGKMLTFPKEEDDDDVKLMTPK).

Belongs to the pentraxin family. In terms of assembly, homopentamer. Pentraxin (or pentaxin) have a discoid arrangement of 5 non-covalently bound subunits. Exists as a dimer under reducing conditions. The cofactor is Ca(2+). In terms of processing, glycosylated.

It localises to the secreted. Functionally, displays several functions associated with host defense: it promotes agglutination, bacterial capsular swelling, phagocytosis, and complement fixation through its calcium-dependent binding to phosphorylcholine. This Gadus morhua (Atlantic cod) protein is C-reactive protein P1.